The sequence spans 240 residues: RING finger protein 151 (240 aa).

Residues 20–58 (CSVCHGVLKRPVRLPCSHIFCKKCILRWLARQKTCPCCR) form an RING-type zinc finger. The TRAF-type zinc-finger motif lies at 101–156 (GHQDSCPFELMVCPNEGCMLRVPRGALDEHRQNCQHGAYHRCSLGCGATLGPVERA).

The chain is RING finger protein 151 (RNF151) from Bos taurus (Bovine).